Here is a 59-residue protein sequence, read N- to C-terminus: Large ribosomal subunit protein uL30 (59 aa).

The protein belongs to the universal ribosomal protein uL30 family. Part of the 50S ribosomal subunit.

This Lactococcus lactis subsp. lactis (strain IL1403) (Streptococcus lactis) protein is Large ribosomal subunit protein uL30.